The chain runs to 532 residues: 2,3-bisphosphoglycerate-independent phosphoglycerate mutase (532 aa).

Positions 15 and 65 each coordinate Mn(2+). Ser-65 functions as the Phosphoserine intermediate in the catalytic mechanism. Substrate contacts are provided by residues His-126, 156 to 157 (RD), Arg-188, Arg-194, 258 to 261 (RPDR), and Lys-331. Asp-398, His-402, Asp-439, His-440, and His-457 together coordinate Mn(2+).

This sequence belongs to the BPG-independent phosphoglycerate mutase family. As to quaternary structure, monomer. Mn(2+) serves as cofactor.

It catalyses the reaction (2R)-2-phosphoglycerate = (2R)-3-phosphoglycerate. It functions in the pathway carbohydrate degradation; glycolysis; pyruvate from D-glyceraldehyde 3-phosphate: step 3/5. Its function is as follows. Catalyzes the interconversion of 2-phosphoglycerate and 3-phosphoglycerate. The protein is 2,3-bisphosphoglycerate-independent phosphoglycerate mutase of Trichodesmium erythraeum (strain IMS101).